We begin with the raw amino-acid sequence, 397 residues long: S-adenosylmethionine synthase (397 aa).

His15 is an ATP binding site. Asp17 is a binding site for Mg(2+). Glu43 provides a ligand contact to K(+). Residues Glu56 and Gln99 each contribute to the L-methionine site. Residues 99–109 (QSGDIAMGVDE) are flexible loop. ATP is bound by residues 175 to 177 (DGK), 241 to 242 (RF), Asp250, 256 to 257 (RK), Ala273, and Lys277. Asp250 provides a ligand contact to L-methionine. Lys281 contacts L-methionine.

It belongs to the AdoMet synthase family. Homotetramer; dimer of dimers. Mg(2+) is required as a cofactor. It depends on K(+) as a cofactor.

Its subcellular location is the cytoplasm. The catalysed reaction is L-methionine + ATP + H2O = S-adenosyl-L-methionine + phosphate + diphosphate. It participates in amino-acid biosynthesis; S-adenosyl-L-methionine biosynthesis; S-adenosyl-L-methionine from L-methionine: step 1/1. Functionally, catalyzes the formation of S-adenosylmethionine (AdoMet) from methionine and ATP. The overall synthetic reaction is composed of two sequential steps, AdoMet formation and the subsequent tripolyphosphate hydrolysis which occurs prior to release of AdoMet from the enzyme. The protein is S-adenosylmethionine synthase of Clostridioides difficile (strain 630) (Peptoclostridium difficile).